Consider the following 440-residue polypeptide: Glutamyl-tRNA(Gln) amidotransferase subunit D (440 aa).

An Asparaginase/glutaminase domain is found at 94 to 424 (PSVTILGTGG…KEVRRMMLTN (331 aa)). Catalysis depends on residues Thr-104, Thr-180, Asp-181, and Lys-258.

This sequence belongs to the asparaginase 1 family. GatD subfamily. In terms of assembly, heterodimer of GatD and GatE.

The enzyme catalyses L-glutamyl-tRNA(Gln) + L-glutamine + ATP + H2O = L-glutaminyl-tRNA(Gln) + L-glutamate + ADP + phosphate + H(+). Functionally, allows the formation of correctly charged Gln-tRNA(Gln) through the transamidation of misacylated Glu-tRNA(Gln) in organisms which lack glutaminyl-tRNA synthetase. The reaction takes place in the presence of glutamine and ATP through an activated gamma-phospho-Glu-tRNA(Gln). The GatDE system is specific for glutamate and does not act on aspartate. The polypeptide is Glutamyl-tRNA(Gln) amidotransferase subunit D (Thermococcus kodakarensis (strain ATCC BAA-918 / JCM 12380 / KOD1) (Pyrococcus kodakaraensis (strain KOD1))).